The primary structure comprises 315 residues: Leucine-rich repeat-containing protein 75B (315 aa).

Positions 1–23 are disordered; the sequence is MGARLGRRAGPEAGSEAGAAAGC. Positions 11–23 are enriched in low complexity; sequence PEAGSEAGAAAGC. LRR repeat units lie at residues 182–195 and 207–220; these read LAVL…LSDE and LPRL…GNRL. Residues 284-315 are disordered; the sequence is PEGSAAGATTPASTWDSTAAGLGPEPQACCAR. Residues 286–297 show a composition bias toward low complexity; the sequence is GSAAGATTPAST.

It belongs to the LRRC75 family.

In terms of biological role, may suppress myogenic differentiation by modulating MYOG expression and Erk1/2 signaling. This chain is Leucine-rich repeat-containing protein 75B, found in Homo sapiens (Human).